The primary structure comprises 142 residues: Chorion class A protein Ld19 (142 aa).

An N-terminal signal peptide occupies residues Met-1–Ser-18.

It belongs to the chorion protein family.

In terms of biological role, this protein is one of many from the eggshell of the gypsy moth. The protein is Chorion class A protein Ld19 of Lymantria dispar (Gypsy moth).